The following is a 119-amino-acid chain: Probable prefoldin subunit 6 (119 aa).

It belongs to the prefoldin subunit beta family. In terms of assembly, heterohexamer of two PFD-alpha type and four PFD-beta type subunits. May interact with MSP1.

Functionally, binds specifically to cytosolic chaperonin (c-CPN) and transfers target proteins to it. Binds to nascent polypeptide chain and promotes folding in an environment in which there are many competing pathways for nonnative proteins. This chain is Probable prefoldin subunit 6, found in Plasmodium falciparum (isolate 3D7).